The sequence spans 172 residues: General stress protein 18 (172 aa).

A PfpI endopeptidase domain is found at 3–171 (KKIAVVLTYY…FNRESLALLE (169 aa)). The active-site Nucleophile is Cys-104. Residue His-105 is part of the active site.

The protein belongs to the peptidase C56 family.

Its function is as follows. Functions in the protection against aldehyde-stress, possibly by degrading damaged proteins. The chain is General stress protein 18 (yfkM) from Bacillus subtilis (strain 168).